The following is a 291-amino-acid chain: Elongation factor Ts (291 aa).

The tract at residues Thr-80–Val-83 is involved in Mg(2+) ion dislocation from EF-Tu.

The protein belongs to the EF-Ts family.

The protein resides in the cytoplasm. Its function is as follows. Associates with the EF-Tu.GDP complex and induces the exchange of GDP to GTP. It remains bound to the aminoacyl-tRNA.EF-Tu.GTP complex up to the GTP hydrolysis stage on the ribosome. This chain is Elongation factor Ts, found in Acinetobacter baumannii (strain AB307-0294).